Reading from the N-terminus, the 377-residue chain is tRNA-specific 2-thiouridylase MnmA (377 aa).

ATP is bound by residues 22–29 (GMSGGVDS) and Met-48. The interval 108–110 (NPD) is interaction with target base in tRNA. Cys-113 (nucleophile) is an active-site residue. The cysteines at positions 113 and 210 are disulfide-linked. Gly-138 contributes to the ATP binding site. The tract at residues 160-162 (KDQ) is interaction with tRNA. Catalysis depends on Cys-210, which acts as the Cysteine persulfide intermediate. The interaction with tRNA stretch occupies residues 322-323 (RY).

Belongs to the MnmA/TRMU family.

The protein resides in the cytoplasm. It catalyses the reaction S-sulfanyl-L-cysteinyl-[protein] + uridine(34) in tRNA + AH2 + ATP = 2-thiouridine(34) in tRNA + L-cysteinyl-[protein] + A + AMP + diphosphate + H(+). Its function is as follows. Catalyzes the 2-thiolation of uridine at the wobble position (U34) of tRNA, leading to the formation of s(2)U34. The protein is tRNA-specific 2-thiouridylase MnmA of Shewanella amazonensis (strain ATCC BAA-1098 / SB2B).